The following is a 113-amino-acid chain: Beta-microseminoprotein (113 aa).

The first 20 residues, 1-20 (MEAWLGSLLFLATMVIASKA), serve as a signal peptide directing secretion. 5 disulfide bridges follow: cysteine 22–cysteine 69, cysteine 38–cysteine 61, cysteine 56–cysteine 92, cysteine 59–cysteine 68, and cysteine 83–cysteine 106.

Belongs to the beta-microseminoprotein family. In terms of assembly, homodimer; Interacts with PI16.

The protein resides in the secreted. The polypeptide is Beta-microseminoprotein (Msmb) (Mus musculus (Mouse)).